The primary structure comprises 413 residues: Serine hydroxymethyltransferase (413 aa).

(6S)-5,6,7,8-tetrahydrofolate is bound by residues Leu117 and 121-123 (GHL). At Lys226 the chain carries N6-(pyridoxal phosphate)lysine. (6S)-5,6,7,8-tetrahydrofolate-binding positions include Glu239 and 349-351 (SPF).

This sequence belongs to the SHMT family. In terms of assembly, homodimer. Requires pyridoxal 5'-phosphate as cofactor.

The protein resides in the cytoplasm. It catalyses the reaction (6R)-5,10-methylene-5,6,7,8-tetrahydrofolate + glycine + H2O = (6S)-5,6,7,8-tetrahydrofolate + L-serine. The protein operates within one-carbon metabolism; tetrahydrofolate interconversion. It participates in amino-acid biosynthesis; glycine biosynthesis; glycine from L-serine: step 1/1. Its function is as follows. Catalyzes the reversible interconversion of serine and glycine with tetrahydrofolate (THF) serving as the one-carbon carrier. This reaction serves as the major source of one-carbon groups required for the biosynthesis of purines, thymidylate, methionine, and other important biomolecules. Also exhibits THF-independent aldolase activity toward beta-hydroxyamino acids, producing glycine and aldehydes, via a retro-aldol mechanism. This is Serine hydroxymethyltransferase from Bacillus cereus (strain G9842).